Consider the following 134-residue polypeptide: Nif-regulating protein A (134 aa).

The C4-type; atypical zinc-finger motif lies at 3–36 (CLECGLVYIVSGLKVPEKISVRVFVNRIEHPFTH).

Interacts with the general archaeal transcription factors TBPs.

In terms of biological role, involved in nitrogen regulation. Enhances the transcription of the nitrogen fixation (nif) operon under nitrogen-limited conditions. Acts by binding to the nifH promoter region. The protein is Nif-regulating protein A of Methanosarcina mazei (strain ATCC BAA-159 / DSM 3647 / Goe1 / Go1 / JCM 11833 / OCM 88) (Methanosarcina frisia).